Here is a 265-residue protein sequence, read N- to C-terminus: Phosphate import ATP-binding protein PstB (265 aa).

Residues 18–260 form the ABC transporter domain; that stretch reads IAAKGVNVYY…PEDPRTESYI (243 aa). 50–57 serves as a coordination point for ATP; it reads GPSGCGKS.

The protein belongs to the ABC transporter superfamily. Phosphate importer (TC 3.A.1.7) family. As to quaternary structure, the complex is composed of two ATP-binding proteins (PstB), two transmembrane proteins (PstC and PstA) and a solute-binding protein (PstS).

It localises to the cell inner membrane. It catalyses the reaction phosphate(out) + ATP + H2O = ADP + 2 phosphate(in) + H(+). Its function is as follows. Part of the ABC transporter complex PstSACB involved in phosphate import. Responsible for energy coupling to the transport system. This Ruegeria sp. (strain TM1040) (Silicibacter sp.) protein is Phosphate import ATP-binding protein PstB.